Here is a 448-residue protein sequence, read N- to C-terminus: Signal recognition particle protein (448 aa).

Residues 101–108 (GLQGSGKT), 182–186 (DSAGR), and 240–243 (SKFD) contribute to the GTP site.

This sequence belongs to the GTP-binding SRP family. SRP54 subfamily. As to quaternary structure, part of the signal recognition particle protein translocation system, which is composed of SRP and FtsY. SRP is a ribonucleoprotein composed of Ffh and a 4.5S RNA molecule.

Its subcellular location is the cytoplasm. It carries out the reaction GTP + H2O = GDP + phosphate + H(+). Involved in targeting and insertion of nascent membrane proteins into the cytoplasmic membrane. Binds to the hydrophobic signal sequence of the ribosome-nascent chain (RNC) as it emerges from the ribosomes. The SRP-RNC complex is then targeted to the cytoplasmic membrane where it interacts with the SRP receptor FtsY. Interaction with FtsY leads to the transfer of the RNC complex to the Sec translocase for insertion into the membrane, the hydrolysis of GTP by both Ffh and FtsY, and the dissociation of the SRP-FtsY complex into the individual components. The chain is Signal recognition particle protein from Helicobacter pylori (strain J99 / ATCC 700824) (Campylobacter pylori J99).